A 184-amino-acid chain; its full sequence is Muscle-specific protein 20 (184 aa).

The Calponin-homology (CH) domain occupies 17 to 122; the sequence is PEMDKEAQEW…NTIFALGRAT (106 aa). A Calponin-like repeat occupies 157 to 181; sequence VGLQAGSNKGATQAGQNLGAGRKIL.

This sequence belongs to the calponin family. Found in synchronous muscle; not found in asynchronous indirect flight muscle.

The chain is Muscle-specific protein 20 (Mp20) from Drosophila melanogaster (Fruit fly).